Consider the following 1015-residue polypeptide: Probable beta-galactosidase B (1015 aa).

Residues 1-20 (MAHIYRLLLLLLSNLWFSTA) form the signal peptide. Asn23 carries an N-linked (GlcNAc...) asparagine glycan. Tyr90 provides a ligand contact to substrate. Asn99 and Asn100 each carry an N-linked (GlcNAc...) asparagine glycan. Substrate contacts are provided by Asn135, Ala136, and Glu137. Asn172 carries an N-linked (GlcNAc...) asparagine glycan. Position 195 (Asn195) interacts with substrate. Glu196 acts as the Proton donor in catalysis. N-linked (GlcNAc...) asparagine glycosylation occurs at Asn211. Tyr265 serves as a coordination point for substrate. Cysteines 271 and 324 form a disulfide. Catalysis depends on Glu308, which acts as the Nucleophile. Residue Tyr373 participates in substrate binding. Asn411, Asn456, Asn554, Asn679, Asn735, Asn775, and Asn821 each carry an N-linked (GlcNAc...) asparagine glycan.

This sequence belongs to the glycosyl hydrolase 35 family.

It localises to the secreted. It catalyses the reaction Hydrolysis of terminal non-reducing beta-D-galactose residues in beta-D-galactosides.. Its function is as follows. Cleaves beta-linked terminal galactosyl residues from gangliosides, glycoproteins, and glycosaminoglycans. The sequence is that of Probable beta-galactosidase B (lacB) from Aspergillus fumigatus (strain CBS 144.89 / FGSC A1163 / CEA10) (Neosartorya fumigata).